Here is a 212-residue protein sequence, read N- to C-terminus: MNLLIMGLPGAGKGTQAAKIVEQFHVAHISTGDMFRAAMANQTEMGVLAKSYIDKGELVPDEVTNGIVKERLSQDDIKETGFLLDGYPRTIEQAHALDKTLAELGIELEGVINIEVNPDSLLERLSGRIIHRVTGETFHKVFNPPVDYKEEDYYQREDDKPETVKRRLDVNIAQGEPIIAHYRAKGLVHDIEGNQDINDVFSDIEKVLTNLK.

10 to 15 is an ATP binding site; the sequence is GAGKGT. Residues 30-59 are NMP; that stretch reads STGDMFRAAMANQTEMGVLAKSYIDKGELV. Residues threonine 31, arginine 36, 57–59, 86–89, and glutamine 93 contribute to the AMP site; these read ELV and GYPR. The LID stretch occupies residues 127-159; the sequence is GRIIHRVTGETFHKVFNPPVDYKEEDYYQREDD. ATP-binding positions include arginine 128 and 137 to 138; that span reads TF. Residues arginine 156 and arginine 167 each contribute to the AMP site. ATP is bound at residue glutamine 195.

It belongs to the adenylate kinase family. In terms of assembly, monomer.

It localises to the cytoplasm. The catalysed reaction is AMP + ATP = 2 ADP. Its pathway is purine metabolism; AMP biosynthesis via salvage pathway; AMP from ADP: step 1/1. Its function is as follows. Catalyzes the reversible transfer of the terminal phosphate group between ATP and AMP. Plays an important role in cellular energy homeostasis and in adenine nucleotide metabolism. The polypeptide is Adenylate kinase (Streptococcus pneumoniae serotype 4 (strain ATCC BAA-334 / TIGR4)).